Consider the following 329-residue polypeptide: DNA-directed RNA polymerase subunit alpha (329 aa).

The tract at residues 1–235 (MQGSVTEFLK…EQLEAFVDLR (235 aa)) is alpha N-terminal domain (alpha-NTD). Residues 249-329 (FDPILLRPVD…NWPPASIADE (81 aa)) form an alpha C-terminal domain (alpha-CTD) region.

This sequence belongs to the RNA polymerase alpha chain family. Homodimer. The RNAP catalytic core consists of 2 alpha, 1 beta, 1 beta' and 1 omega subunit. When a sigma factor is associated with the core the holoenzyme is formed, which can initiate transcription.

It catalyses the reaction RNA(n) + a ribonucleoside 5'-triphosphate = RNA(n+1) + diphosphate. DNA-dependent RNA polymerase catalyzes the transcription of DNA into RNA using the four ribonucleoside triphosphates as substrates. The protein is DNA-directed RNA polymerase subunit alpha of Shigella dysenteriae serotype 1 (strain Sd197).